Reading from the N-terminus, the 443-residue chain is UDP-N-acetylmuramate--L-alanine ligase (443 aa).

An ATP-binding site is contributed by 110–116 (GAHGKTS).

It belongs to the MurCDEF family.

The protein resides in the cytoplasm. The catalysed reaction is UDP-N-acetyl-alpha-D-muramate + L-alanine + ATP = UDP-N-acetyl-alpha-D-muramoyl-L-alanine + ADP + phosphate + H(+). It participates in cell wall biogenesis; peptidoglycan biosynthesis. Cell wall formation. The sequence is that of UDP-N-acetylmuramate--L-alanine ligase from Streptococcus agalactiae serotype V (strain ATCC BAA-611 / 2603 V/R).